The primary structure comprises 106 residues: Iron-sulfur cluster assembly protein CyaY (106 aa).

This sequence belongs to the frataxin family.

Functionally, involved in iron-sulfur (Fe-S) cluster assembly. May act as a regulator of Fe-S biogenesis. This is Iron-sulfur cluster assembly protein CyaY from Cronobacter sakazakii (strain ATCC BAA-894) (Enterobacter sakazakii).